Reading from the N-terminus, the 88-residue chain is Kunitz-type kappaPI-theraphotoxin-Hs1d (88 aa).

A signal peptide spans M1–A27. Residues D28–R33 constitute a propeptide that is removed on maturation. The BPTI/Kunitz inhibitor domain occupies C37–C85. Disulfide bonds link C37-C85 and C60-C81.

This sequence belongs to the venom Kunitz-type family. 01 (intermediate) subfamily. As to expression, expressed by the venom gland.

It localises to the secreted. Its function is as follows. Serine protease inhibitor that inhibits trypsin at a molar ratio of 1:1. The sequence is that of Kunitz-type kappaPI-theraphotoxin-Hs1d from Cyriopagopus schmidti (Chinese bird spider).